The sequence spans 88 residues: UPF0250 protein swp_3927 (88 aa).

It belongs to the UPF0250 family.

This chain is UPF0250 protein swp_3927, found in Shewanella piezotolerans (strain WP3 / JCM 13877).